We begin with the raw amino-acid sequence, 107 residues long: UPF0473 protein Ldb1604 (107 aa).

The protein belongs to the UPF0473 family.

The sequence is that of UPF0473 protein Ldb1604 from Lactobacillus delbrueckii subsp. bulgaricus (strain ATCC 11842 / DSM 20081 / BCRC 10696 / JCM 1002 / NBRC 13953 / NCIMB 11778 / NCTC 12712 / WDCM 00102 / Lb 14).